Here is a 558-residue protein sequence, read N- to C-terminus: 2-isopropylmalate synthase (558 aa).

The Pyruvate carboxyltransferase domain occupies 30–303; it reads PIWCSVDLRD…DPKLDFSNIP (274 aa). Asp39, His242, His244, and Asn278 together coordinate Mg(2+). A regulatory domain region spans residues 438–558; the sequence is LNNTLCVQDF…GLVSALNRII (121 aa).

It belongs to the alpha-IPM synthase/homocitrate synthase family. LeuA type 2 subfamily. In terms of assembly, homodimer. Mg(2+) is required as a cofactor.

It is found in the cytoplasm. It carries out the reaction 3-methyl-2-oxobutanoate + acetyl-CoA + H2O = (2S)-2-isopropylmalate + CoA + H(+). It functions in the pathway amino-acid biosynthesis; L-leucine biosynthesis; L-leucine from 3-methyl-2-oxobutanoate: step 1/4. Catalyzes the condensation of the acetyl group of acetyl-CoA with 3-methyl-2-oxobutanoate (2-ketoisovalerate) to form 3-carboxy-3-hydroxy-4-methylpentanoate (2-isopropylmalate). The polypeptide is 2-isopropylmalate synthase (Helicobacter hepaticus (strain ATCC 51449 / 3B1)).